We begin with the raw amino-acid sequence, 911 residues long: Viral IRF4-like protein (911 aa).

Positions 7–114 (SEWATLWIID…GSYVVWQLVR (108 aa)) form a DNA-binding region, IRF tryptophan pentad repeat. Disordered stretches follow at residues 147-184 (TTAT…PRKS), 211-302 (ASTS…SRLP), 494-537 (GGAP…PYVC), and 681-727 (ELQE…FFDP). Low complexity predominate over residues 211-221 (ASTSGMGSSGT). Polar residues-rich tracts occupy residues 222 to 231 (RQVTQASSFT) and 495 to 505 (GAPNQGLSHTQ). Over residues 697–710 (RRPRSRSPHGRRTP) the composition is skewed to basic residues.

It belongs to the IRF family. Interacts with host MDM2; this interaction facilitates the proteasomal degradation of TP53/p53. Interacts with host IRF7; this interaction prevents IRF7 dimerization and subsequent activation.

Its subcellular location is the host nucleus. Functionally, plays a role in host cell apoptosis modulation by promoting TP53/p53 ubiquitination and subsequent degradation and thus down-regulating TP53/p53-mediated apoptosis. Works as a potential viral transcription factor to modulate host gene expression to build favorable environments for the viral lytic life cycle and greatly accelerates the induction of an immediate early gene RTA, early genes ORF36 and ORF57, late genes ORF25 and ORF64, and latent genes LANA1 and v-IRF3. Inhibits host interferon-alpha production by interacting with host IRF7 and preventing IRF7 dimerization. The sequence is that of Viral IRF4-like protein (vIRF-4) from Homo sapiens (Human).